A 275-amino-acid polypeptide reads, in one-letter code: Formamidopyrimidine-DNA glycosylase (275 aa).

Proline 2 serves as the catalytic Schiff-base intermediate with DNA. Residue glutamate 3 is the Proton donor of the active site. Lysine 59 acts as the Proton donor; for beta-elimination activity in catalysis. Positions 93, 112, and 153 each coordinate DNA. The FPG-type zinc finger occupies 238–272 (NVYDRVGKPCPRCQTAIERIVVAQRSTFFCPLCQV). Arginine 262 (proton donor; for delta-elimination activity) is an active-site residue.

This sequence belongs to the FPG family. In terms of assembly, monomer. The cofactor is Zn(2+).

It catalyses the reaction Hydrolysis of DNA containing ring-opened 7-methylguanine residues, releasing 2,6-diamino-4-hydroxy-5-(N-methyl)formamidopyrimidine.. The enzyme catalyses 2'-deoxyribonucleotide-(2'-deoxyribose 5'-phosphate)-2'-deoxyribonucleotide-DNA = a 3'-end 2'-deoxyribonucleotide-(2,3-dehydro-2,3-deoxyribose 5'-phosphate)-DNA + a 5'-end 5'-phospho-2'-deoxyribonucleoside-DNA + H(+). Involved in base excision repair of DNA damaged by oxidation or by mutagenic agents. Acts as a DNA glycosylase that recognizes and removes damaged bases. Has a preference for oxidized purines, such as 7,8-dihydro-8-oxoguanine (8-oxoG). Has AP (apurinic/apyrimidinic) lyase activity and introduces nicks in the DNA strand. Cleaves the DNA backbone by beta-delta elimination to generate a single-strand break at the site of the removed base with both 3'- and 5'-phosphates. The chain is Formamidopyrimidine-DNA glycosylase from Chloroflexus aggregans (strain MD-66 / DSM 9485).